We begin with the raw amino-acid sequence, 820 residues long: MLCLTSSSSSAPAPLLPSLADRPSPGIAGGGGNVRLSVVSSPRRSWPGKVKTNFSVPATARKNKTMVTVVEEVDHLPIYDLDPKLEEFKDHFNYRIKRYLDQKCLIEKHEGGLEEFSKGYLKFGINTVDGATIYREWAPAAQEAQLIGEFNNWNGAKHKMEKDKFGIWSIKISHVNGKPAIPHNSKVKFRFRHGGGAWVDRIPAWIRYATFDASKFGAPYDGVHWDPPACERYVFKHPRPPKPDAPRIYEAHVGMSGEEPEVSTYREFADNVLPRIRANNYNTVQLMAIMEHSYYASFGYHVTNFFAVSSRSGTPEDLKYLVDKAHSLGLRVLMDVVHSHASNNVTDGLNGYDVGQNTHESYFHTGDRGYHKLWDSRLFNYANWEVLRFLLSNLRYWMDEFMFDGFRFDGVTSMLYHHHGINKGFTGNYKEYFSLDTDVDAIVYMMLANHLMHKLLPEATIVAEDVSGMPVLCRPVDEGGVGFDFRLAMAIPDRWIDYLKNKEDRKWSMSEIVQTLTNRRYTEKCIAYAESHDQSIVGDKTIAFLLMDKEMYTGMSDLQPASPTINRGIALQKMIHFITMALGGDGYLNFMGNEFGHPEWIDFPREGNNWSYDKCRRQWSLVDTDHLRYKYMNAFDQAMNALEEEFSFLSSSKQIVSDMNEKDKVIVFERGDLVFVFNFHPNKTYKGYKVGCDLPGKYRVALDSDALVFGGHGRVGHDVDHFTSPEGMPGVPETNFNNRPNSFKVLSPPRTCVAYYRVDEDREELRRGGAVASGKIVTEYIDVEATSGETISGGWKGSEKDDCGKKGMKFVFRSSDEDCK.

Low complexity predominate over residues 1–20 (MLCLTSSSSSAPAPLLPSLA). Residues 1–28 (MLCLTSSSSSAPAPLLPSLADRPSPGIA) are disordered. Residues 1 to 64 (MLCLTSSSSS…SVPATARKNK (64 aa)) constitute a chloroplast transit peptide. Residues W153 and K188 each contribute to the (1,4-alpha-D-glucosyl)n site. D409 (nucleophile) is an active-site residue. Catalysis depends on E464, which acts as the Proton donor.

The protein belongs to the glycosyl hydrolase 13 family. GlgB subfamily. Monomer.

It is found in the plastid. The protein localises to the chloroplast. Its subcellular location is the amyloplast. It catalyses the reaction Transfers a segment of a (1-&gt;4)-alpha-D-glucan chain to a primary hydroxy group in a similar glucan chain.. It participates in glycan biosynthesis; starch biosynthesis. Its function is as follows. Catalyzes the formation of the alpha-1,6-glucosidic linkages in starch by scission of a 1,4-alpha-linked oligosaccharide from growing alpha-1,4-glucan chains and the subsequent attachment of the oligosaccharide to the alpha-1,6 position. This is 1,4-alpha-glucan-branching enzyme, chloroplastic/amyloplastic (SBE1) from Oryza sativa subsp. japonica (Rice).